Reading from the N-terminus, the 370-residue chain is Ribosomal RNA small subunit methyltransferase H (370 aa).

S-adenosyl-L-methionine is bound by residues 85–87 (GGH), Asp104, Tyr131, Asp152, and Gln159. 2 stretches are compositionally biased toward basic and acidic residues: residues 332–345 (GAERATPEEIERNP) and 353–370 (RALEKVAGRPTTARRDAR). Residues 332 to 370 (GAERATPEEIERNPRSAPVRLRALEKVAGRPTTARRDAR) form a disordered region.

The protein belongs to the methyltransferase superfamily. RsmH family.

It is found in the cytoplasm. It carries out the reaction cytidine(1402) in 16S rRNA + S-adenosyl-L-methionine = N(4)-methylcytidine(1402) in 16S rRNA + S-adenosyl-L-homocysteine + H(+). Functionally, specifically methylates the N4 position of cytidine in position 1402 (C1402) of 16S rRNA. The polypeptide is Ribosomal RNA small subunit methyltransferase H (Mycobacterium sp. (strain KMS)).